Reading from the N-terminus, the 430-residue chain is Anaerobic glycerol-3-phosphate dehydrogenase subunit B (430 aa).

Belongs to the anaerobic G-3-P dehydrogenase subunit B family. In terms of assembly, composed of a catalytic GlpA/B dimer and of membrane bound GlpC. FMN is required as a cofactor.

It catalyses the reaction a quinone + sn-glycerol 3-phosphate = dihydroxyacetone phosphate + a quinol. It functions in the pathway polyol metabolism; glycerol degradation via glycerol kinase pathway; glycerone phosphate from sn-glycerol 3-phosphate (anaerobic route): step 1/1. In terms of biological role, conversion of glycerol 3-phosphate to dihydroxyacetone. Uses fumarate or nitrate as electron acceptor. The chain is Anaerobic glycerol-3-phosphate dehydrogenase subunit B from Actinobacillus succinogenes (strain ATCC 55618 / DSM 22257 / CCUG 43843 / 130Z).